The chain runs to 316 residues: UDP-N-acetylenolpyruvoylglucosamine reductase (316 aa).

The 199-residue stretch at 27–225 (VGGKAERFYR…KTAINALLKK (199 aa)) folds into the FAD-binding PCMH-type domain. The active site involves Arg-190. The active-site Proton donor is Ser-239. Glu-309 is an active-site residue.

It belongs to the MurB family. Requires FAD as cofactor.

It localises to the cytoplasm. It catalyses the reaction UDP-N-acetyl-alpha-D-muramate + NADP(+) = UDP-N-acetyl-3-O-(1-carboxyvinyl)-alpha-D-glucosamine + NADPH + H(+). The protein operates within cell wall biogenesis; peptidoglycan biosynthesis. Its function is as follows. Cell wall formation. The protein is UDP-N-acetylenolpyruvoylglucosamine reductase of Coxiella burnetii (strain RSA 331 / Henzerling II).